The primary structure comprises 417 residues: DNA primase DnaG (417 aa).

In terms of domain architecture, Toprim spans aspartate 171–isoleucine 257. Mg(2+) is bound by residues glutamate 177, aspartate 219, and aspartate 221. Residues valine 278–proline 325 form a disordered region. Over residues proline 279 to proline 289 the composition is skewed to basic and acidic residues.

This sequence belongs to the archaeal DnaG primase family. Forms a ternary complex with MCM helicase and DNA. Mg(2+) serves as cofactor.

It catalyses the reaction ssDNA + n NTP = ssDNA/pppN(pN)n-1 hybrid + (n-1) diphosphate.. In terms of biological role, RNA polymerase that catalyzes the synthesis of short RNA molecules used as primers for DNA polymerase during DNA replication. This is DNA primase DnaG from Methanosphaerula palustris (strain ATCC BAA-1556 / DSM 19958 / E1-9c).